Reading from the N-terminus, the 402-residue chain is Glutamate N-acetyltransferase (402 aa).

Positions 146, 172, 185, 267, 397, and 402 each coordinate substrate. Residue Thr-185 is the Nucleophile of the active site.

The protein belongs to the ArgJ family. In terms of assembly, heterotetramer of two alpha and two beta chains.

The protein resides in the cytoplasm. The enzyme catalyses N(2)-acetyl-L-ornithine + L-glutamate = N-acetyl-L-glutamate + L-ornithine. It participates in amino-acid biosynthesis; L-arginine biosynthesis; L-ornithine and N-acetyl-L-glutamate from L-glutamate and N(2)-acetyl-L-ornithine (cyclic): step 1/1. With respect to regulation, competitively inhibited by L-ornithine. In terms of biological role, catalyzes the transfer of the acetyl group from N(2)-acetylornithine to glutamate, forming N-acetylglutamate and L-ornithine. In Methanocaldococcus jannaschii (strain ATCC 43067 / DSM 2661 / JAL-1 / JCM 10045 / NBRC 100440) (Methanococcus jannaschii), this protein is Glutamate N-acetyltransferase.